Consider the following 422-residue polypeptide: MPEVKVPELAESITEGTIAEWLKNVGDSVEKGEAILELETDKVNVEVVSEEAGVLSEQLASEGDTVEVGQAIAIIGEGSGNASKENSNDNTPQQNEETNNKKEETTNNSVDKAEVNQANDDNQQRINATPSARRYARENGVNLAEVSPKTNDVVRKEDIDKKQQAPASTQTTQQASAKEEKKYNQYPTKPVIREKMSRRKKTAAKKLLEVSNNTAMLTTFNEVDMTNVMELRKRKKEQFMKDHDGTKLGFMSFFTKASVAALKKYPEVNAEIDGDDMITKQYYDIGVAVSTDDGLLVPFVRDCDKKNFAEIEAEIANLAVKAREKKLGLDDMVNGSFTITNGGIFGSMMSTPIINGNQAAILGMHSIITRPIAIDQDTIENRPMMYIALSYDHRIIDGKEAVGFLKTIKELIENPEDLLLES.

The Lipoyl-binding domain occupies 1–76 (MPEVKVPELA…EVGQAIAIIG (76 aa)). An N6-lipoyllysine modification is found at Lys-42. The segment at 77–185 (EGSGNASKEN…SAKEEKKYNQ (109 aa)) is disordered. Composition is skewed to polar residues over residues 80–94 (GNAS…TPQQ) and 116–130 (NQAN…NATP). A Peripheral subunit-binding (PSBD) domain is found at 127-163 (NATPSARRYARENGVNLAEVSPKTNDVVRKEDIDKKQ). The span at 152-163 (DVVRKEDIDKKQ) shows a compositional bias: basic and acidic residues. Residues 164 to 176 (QAPASTQTTQQAS) show a composition bias toward low complexity. Active-site residues include His-393 and Asp-397.

Belongs to the 2-oxoacid dehydrogenase family. In terms of assembly, forms a 24-polypeptide structural core with octahedral symmetry. Part of the 2-oxoglutarate dehydrogenase (OGDH) complex composed of E1 (2-oxoglutarate dehydrogenase), E2 (dihydrolipoamide succinyltransferase) and E3 (dihydrolipoamide dehydrogenase); the complex contains multiple copies of the three enzymatic components (E1, E2 and E3). (R)-lipoate is required as a cofactor.

It catalyses the reaction N(6)-[(R)-dihydrolipoyl]-L-lysyl-[protein] + succinyl-CoA = N(6)-[(R)-S(8)-succinyldihydrolipoyl]-L-lysyl-[protein] + CoA. It functions in the pathway amino-acid degradation; L-lysine degradation via saccharopine pathway; glutaryl-CoA from L-lysine: step 6/6. Functionally, E2 component of the 2-oxoglutarate dehydrogenase (OGDH) complex which catalyzes the second step in the conversion of 2-oxoglutarate to succinyl-CoA and CO(2). The polypeptide is Dihydrolipoyllysine-residue succinyltransferase component of 2-oxoglutarate dehydrogenase complex (odhB) (Staphylococcus aureus (strain USA300)).